A 486-amino-acid chain; its full sequence is Glutamate--tRNA ligase (486 aa).

The 'HIGH' region signature appears at 11–21 (PSPTGVVHIGN). A 'KMSKS' region motif is present at residues 255 to 259 (KLSKR). ATP is bound at residue K258.

Belongs to the class-I aminoacyl-tRNA synthetase family. Glutamate--tRNA ligase type 1 subfamily. As to quaternary structure, monomer.

It is found in the cytoplasm. It carries out the reaction tRNA(Glu) + L-glutamate + ATP = L-glutamyl-tRNA(Glu) + AMP + diphosphate. Its function is as follows. Catalyzes the attachment of glutamate to tRNA(Glu) in a two-step reaction: glutamate is first activated by ATP to form Glu-AMP and then transferred to the acceptor end of tRNA(Glu). The protein is Glutamate--tRNA ligase of Streptococcus pneumoniae (strain CGSP14).